The sequence spans 114 residues: MSCQQSQQQCQPPPKCTPKCTPKCPAPKCPPKCPPVSSCCSVSSGGCCGSSSGGGCGSNSGGCCSSGGGGCCLSHHRRHRSHRRRPQSSDCCSQPSGGSSCCGGGSSQHSGGCC.

Over residues Met-1–Cys-10 the composition is skewed to low complexity. 2 disordered regions span residues Met-1–Thr-21 and His-75–Cys-114. Residues His-75–Pro-86 show a composition bias toward basic residues. Residues Ser-88–Ser-99 are compositionally biased toward low complexity.

The protein belongs to the LCE family. In terms of assembly, interacts with CYSRT1. Skin-specific. Expression was readily detected in adult trunk skin, adult arm skin, fetal skin, penal skin, vulva, esophagus and tongue. Not expressed in the cervix, rectum, lung, colon, or placenta.

Precursors of the cornified envelope of the stratum corneum. This chain is Late cornified envelope protein 1D (LCE1D), found in Homo sapiens (Human).